A 299-amino-acid chain; its full sequence is Probable lipid kinase YegS (299 aa).

The 132-residue stretch at 2–133 folds into the DAGKc domain; that stretch reads AEFPASLLIL…IDMAQVNKQT (132 aa). Residues T40, 66 to 72, and T95 contribute to the ATP site; that span reads GDGTINE. Mg(2+)-binding residues include L215, D218, and L220. E271 (proton acceptor) is an active-site residue.

This sequence belongs to the diacylglycerol/lipid kinase family. YegS lipid kinase subfamily. It depends on Mg(2+) as a cofactor. Ca(2+) is required as a cofactor.

It is found in the cytoplasm. Probably phosphorylates lipids; the in vivo substrate is unknown. The chain is Probable lipid kinase YegS from Shigella dysenteriae serotype 1 (strain Sd197).